Consider the following 313-residue polypeptide: Cytochrome f (313 aa).

Positions M1–A30 are cleaved as a signal peptide. Heme contacts are provided by Y31, C51, C54, and H55. Residues V279–L298 traverse the membrane as a helical segment.

This sequence belongs to the cytochrome f family. The 4 large subunits of the cytochrome b6-f complex are cytochrome b6, subunit IV (17 kDa polypeptide, petD), cytochrome f and the Rieske protein, while the 4 small subunits are PetG, PetL, PetM and PetN. The complex functions as a dimer. It depends on heme as a cofactor.

The protein localises to the plastid. It is found in the chloroplast thylakoid membrane. In terms of biological role, component of the cytochrome b6-f complex, which mediates electron transfer between photosystem II (PSII) and photosystem I (PSI), cyclic electron flow around PSI, and state transitions. This is Cytochrome f from Nephroselmis olivacea (Green alga).